The chain runs to 261 residues: 4-hydroxy-tetrahydrodipicolinate reductase (261 aa).

Residue 9 to 14 participates in NAD(+) binding; it reads GCLGRM. R36 lines the NADP(+) pocket. NAD(+)-binding positions include 97-99 and 118-121; these read GTT and SANM. Residue H151 is the Proton donor/acceptor of the active site. Residue H152 coordinates (S)-2,3,4,5-tetrahydrodipicolinate. K155 (proton donor) is an active-site residue. 161 to 162 lines the (S)-2,3,4,5-tetrahydrodipicolinate pocket; sequence GT.

This sequence belongs to the DapB family.

The protein resides in the cytoplasm. It catalyses the reaction (S)-2,3,4,5-tetrahydrodipicolinate + NAD(+) + H2O = (2S,4S)-4-hydroxy-2,3,4,5-tetrahydrodipicolinate + NADH + H(+). The enzyme catalyses (S)-2,3,4,5-tetrahydrodipicolinate + NADP(+) + H2O = (2S,4S)-4-hydroxy-2,3,4,5-tetrahydrodipicolinate + NADPH + H(+). It participates in amino-acid biosynthesis; L-lysine biosynthesis via DAP pathway; (S)-tetrahydrodipicolinate from L-aspartate: step 4/4. Its function is as follows. Catalyzes the conversion of 4-hydroxy-tetrahydrodipicolinate (HTPA) to tetrahydrodipicolinate. In Wolbachia pipientis wMel, this protein is 4-hydroxy-tetrahydrodipicolinate reductase.